Consider the following 216-residue polypeptide: ATP synthase subunit 5, mitochondrial (216 aa).

This sequence belongs to the ATPase delta chain family. As to quaternary structure, F-type ATPases have 2 components, CF(1) - the catalytic core - and CF(0) - the membrane proton channel. CF(1) has five subunits: alpha(3), beta(3), gamma(1), delta(1), epsilon(1). CF(0) has three main subunits: a, b and c.

The protein resides in the mitochondrion. It localises to the mitochondrion inner membrane. Its function is as follows. Mitochondrial membrane ATP synthase (F(1)F(0) ATP synthase or Complex V) produces ATP from ADP in the presence of a proton gradient across the membrane which is generated by electron transport complexes of the respiratory chain. F-type ATPases consist of two structural domains, F(1) - containing the extramembraneous catalytic core and F(0) - containing the membrane proton channel, linked together by a central stalk and a peripheral stalk. During catalysis, ATP synthesis in the catalytic domain of F(1) is coupled via a rotary mechanism of the central stalk subunits to proton translocation. Part of the complex F(0) domain and the peripheric stalk, which acts as a stator to hold the catalytic alpha(3)beta(3) subcomplex and subunit a/ATP6 static relative to the rotary elements. The protein is ATP synthase subunit 5, mitochondrial (atp5) of Schizosaccharomyces pombe (strain 972 / ATCC 24843) (Fission yeast).